We begin with the raw amino-acid sequence, 176 residues long: Peptide deformylase (176 aa).

Fe cation contacts are provided by C94 and H136. The active site involves E137. Position 140 (H140) interacts with Fe cation.

This sequence belongs to the polypeptide deformylase family. Requires Fe(2+) as cofactor.

It carries out the reaction N-terminal N-formyl-L-methionyl-[peptide] + H2O = N-terminal L-methionyl-[peptide] + formate. Functionally, removes the formyl group from the N-terminal Met of newly synthesized proteins. Requires at least a dipeptide for an efficient rate of reaction. N-terminal L-methionine is a prerequisite for activity but the enzyme has broad specificity at other positions. This chain is Peptide deformylase, found in Bartonella henselae (strain ATCC 49882 / DSM 28221 / CCUG 30454 / Houston 1) (Rochalimaea henselae).